A 346-amino-acid polypeptide reads, in one-letter code: Holliday junction branch migration complex subunit RuvB (346 aa).

The interval 1–182 (MKIELLNTPA…FGISSRFDYY (182 aa)) is large ATPase domain (RuvB-L). ATP is bound by residues I21, R22, G63, K66, T67, T68, 129 to 131 (EDF), R172, Y182, and R219. T67 serves as a coordination point for Mg(2+). Residues 183–253 (PPELLERIIL…IAMTTLASLE (71 aa)) are small ATPAse domain (RuvB-S). Positions 256–346 (EEGLDDMDKK…GPLFDAAPAR (91 aa)) are head domain (RuvB-H). 2 residues coordinate DNA: R311 and R316.

The protein belongs to the RuvB family. Homohexamer. Forms an RuvA(8)-RuvB(12)-Holliday junction (HJ) complex. HJ DNA is sandwiched between 2 RuvA tetramers; dsDNA enters through RuvA and exits via RuvB. An RuvB hexamer assembles on each DNA strand where it exits the tetramer. Each RuvB hexamer is contacted by two RuvA subunits (via domain III) on 2 adjacent RuvB subunits; this complex drives branch migration. In the full resolvosome a probable DNA-RuvA(4)-RuvB(12)-RuvC(2) complex forms which resolves the HJ.

It is found in the cytoplasm. The enzyme catalyses ATP + H2O = ADP + phosphate + H(+). Functionally, the RuvA-RuvB-RuvC complex processes Holliday junction (HJ) DNA during genetic recombination and DNA repair, while the RuvA-RuvB complex plays an important role in the rescue of blocked DNA replication forks via replication fork reversal (RFR). RuvA specifically binds to HJ cruciform DNA, conferring on it an open structure. The RuvB hexamer acts as an ATP-dependent pump, pulling dsDNA into and through the RuvAB complex. RuvB forms 2 homohexamers on either side of HJ DNA bound by 1 or 2 RuvA tetramers; 4 subunits per hexamer contact DNA at a time. Coordinated motions by a converter formed by DNA-disengaged RuvB subunits stimulates ATP hydrolysis and nucleotide exchange. Immobilization of the converter enables RuvB to convert the ATP-contained energy into a lever motion, pulling 2 nucleotides of DNA out of the RuvA tetramer per ATP hydrolyzed, thus driving DNA branch migration. The RuvB motors rotate together with the DNA substrate, which together with the progressing nucleotide cycle form the mechanistic basis for DNA recombination by continuous HJ branch migration. Branch migration allows RuvC to scan DNA until it finds its consensus sequence, where it cleaves and resolves cruciform DNA. The chain is Holliday junction branch migration complex subunit RuvB from Chlorobium phaeobacteroides (strain DSM 266 / SMG 266 / 2430).